The sequence spans 128 residues: MARVTVEDCIDKVDNRFELVLLAGHRARMISSGSPITVDRDNDKNPVVALREIADETVSPEDLKEDLIHSLQKYTEVDEPEPESVPLIASSEGGVDDADIVLDRMTEEELLAGLQGLVPPEQTDDDEG.

Belongs to the RNA polymerase subunit omega family. The RNAP catalytic core consists of 2 alpha, 1 beta, 1 beta' and 1 omega subunit. When a sigma factor is associated with the core the holoenzyme is formed, which can initiate transcription.

The enzyme catalyses RNA(n) + a ribonucleoside 5'-triphosphate = RNA(n+1) + diphosphate. Promotes RNA polymerase assembly. Latches the N- and C-terminal regions of the beta' subunit thereby facilitating its interaction with the beta and alpha subunits. The chain is DNA-directed RNA polymerase subunit omega from Azorhizobium caulinodans (strain ATCC 43989 / DSM 5975 / JCM 20966 / LMG 6465 / NBRC 14845 / NCIMB 13405 / ORS 571).